We begin with the raw amino-acid sequence, 161 residues long: Crossover junction endodeoxyribonuclease RuvC (161 aa).

Catalysis depends on residues aspartate 9, glutamate 69, and histidine 144. Mg(2+)-binding residues include aspartate 9, glutamate 69, and histidine 144.

The protein belongs to the RuvC family. As to quaternary structure, homodimer which binds Holliday junction (HJ) DNA. The HJ becomes 2-fold symmetrical on binding to RuvC with unstacked arms; it has a different conformation from HJ DNA in complex with RuvA. In the full resolvosome a probable DNA-RuvA(4)-RuvB(12)-RuvC(2) complex forms which resolves the HJ. The cofactor is Mg(2+).

It is found in the cytoplasm. The enzyme catalyses Endonucleolytic cleavage at a junction such as a reciprocal single-stranded crossover between two homologous DNA duplexes (Holliday junction).. The RuvA-RuvB-RuvC complex processes Holliday junction (HJ) DNA during genetic recombination and DNA repair. Endonuclease that resolves HJ intermediates. Cleaves cruciform DNA by making single-stranded nicks across the HJ at symmetrical positions within the homologous arms, yielding a 5'-phosphate and a 3'-hydroxyl group; requires a central core of homology in the junction. The consensus cleavage sequence is 5'-(A/T)TT(C/G)-3'. Cleavage occurs on the 3'-side of the TT dinucleotide at the point of strand exchange. HJ branch migration catalyzed by RuvA-RuvB allows RuvC to scan DNA until it finds its consensus sequence, where it cleaves and resolves the cruciform DNA. The protein is Crossover junction endodeoxyribonuclease RuvC of Borrelia turicatae (strain 91E135).